The following is a 540-amino-acid chain: Mitochondrial antiviral-signaling protein (540 aa).

Pro2 carries the post-translational modification N-acetylproline. Topologically, residues 2 to 513 (PFAEDKTYKY…REVPCHRPSP (512 aa)) are cytoplasmic. Glycyl lysine isopeptide (Lys-Gly) (interchain with G-Cter in ubiquitin) cross-links involve residues Lys7 and Lys10. One can recognise a CARD domain in the interval 10–77 (KYICRNFSNF…WVEYFIAALR (68 aa)). A required for interaction with NLRX1 region spans residues 10-77 (KYICRNFSNF…WVEYFIAALR (68 aa)). A lipid anchor (S-palmitoyl cysteine) is attached at Cys79. The disordered stretch occupies residues 95–297 (YQPRTSDRPP…EAPANSLPSK (203 aa)). The segment covering 106 to 122 (PLEPPSLPAERPGPPTP) has biased composition (pro residues). Positions 143 to 147 (PVQET) are interaction with TRAF2. 2 stretches are compositionally biased toward polar residues: residues 145–165 (QETQ…QTLS) and 179–216 (ESSS…SLTP). Residues Ser152, Ser157, Ser165, Ser180, and Ser188 each carry the phosphoserine modification. Residues 153 to 158 (PGENSE) are interaction with TRAF6. Thr215 bears the Phosphothreonine mark. Phosphoserine is present on residues Ser222 and Ser233. A Phosphothreonine modification is found at Thr234. At Arg236 the chain carries Asymmetric dimethylarginine. Over residues 241–266 (PGPTGSVVSTGTSFSSSSPGLASAGA) the composition is skewed to low complexity. A phosphoserine mark is found at Ser253 and Ser258. Glycyl lysine isopeptide (Lys-Gly) (interchain with G-Cter in ubiquitin) cross-links involve residues Lys311 and Lys325. Disordered regions lie at residues 314 to 358 (ANPA…RAGM) and 373 to 419 (SAST…SELS). 3 stretches are compositionally biased toward polar residues: residues 317–331 (ASVS…TSSK), 339–355 (NALT…NSTR), and 373–382 (SASTVPTDGS). Residues 388–403 (TPAAPTPAGATGGSSA) show a composition bias toward low complexity. Ser408 carries the phosphoserine modification. The short motif at 439 to 442 (LAIS) is the pLxIS motif element. Ser442 is subject to Phosphoserine; by TBK1. The interval 455–460 (PEENEY) is interaction with TRAF6. Residues Lys461 and Lys500 each participate in a glycyl lysine isopeptide (Lys-Gly) (interchain with G-Cter in ubiquitin) cross-link. Lys461 is covalently cross-linked ((Microbial infection) Glycyl lysine isopeptide (Lys-Gly) (interchain with G-Cter in UFM1)). The segment at 476–507 (IQLLEGNPGPPADPDGGPRPQADRKFQEREVP) is disordered. The span at 496–507 (QADRKFQEREVP) shows a compositional bias: basic and acidic residues. Residues 514–534 (GALWLQVAVTGVLVVTLLVVL) traverse the membrane as a helical segment. Residues 535 to 540 (YRRRLH) are Mitochondrial intermembrane-facing.

As to quaternary structure, self-associates and polymerizes (via CARD domains) to form 400 nM long three-stranded helical filaments on mitochondria, filament nucleation requires interaction with RIGI whose CARD domains act as a template for filament assembly. Interacts with RIGI, IFIH1/MDA5, TRAF2, TRAF6 and C1QBP. May interact with FADD, RIPK1, CHUK and IKBKB. Interacts (when phosphorylated) with IRF3; following activation and phosphorylation on the pLxIS motif by TBK1, recruits IRF3. Interacts with NLRX1. Interaction with NLRX1 requires the CARD domain. Interacts with PSMA7. Interacts with TRAFD1. Interacts (via C-terminus) with PCBP2 in a complex containing MAVS/IPS1, PCBP2 and ITCH. Interacts with CYLD. Interacts with SRC. Interacts with DHX58/LGP2 and IKBKE. Interacts with STING1. Interacts with IFIT3 (via N-terminus). Interacts with TBK1 only in the presence of IFIT3. Interacts with TTLL12; the interaction prevents MAVS binding to TBK1 and IKBKE. Interacts with MUL1. Interacts with ANKRD17. Interacts with NDFIP1. Interacts with SMURF1; the interaction is mediated by NDFIP1 and leads to MAVS ubiquitination and degradation. Interacts with UBXN1; this interaction inhibits MAVS-mediated antiviral pathway. Interacts (via C-terminus) with GPATCH3; the interaction is markedly increased upon viral infection. Directly interacts (via CARD domain) with ATG5 and ATG12, either as ATG5 and ATG12 monomers or as ATG12-ATG5 conjugates. Interacts with DHX33 (via the helicase C-terminal domain). Interacts with DDX3X (via C-terminus); this interaction occurs rapidly, but transiently after Sendai virus infection. The interaction with DDX3X potentiates MAVS-mediated IFNB induction. Conversely inhibition of this interaction, for instance by HCV core protein, prevents MAVS-mediated IFNB induction. Transiently interacts with TRAF3 early during Sendai virus infection. Interacts with CLPB; the interaction is enhanced by Sendai virus infection. Interacts with TRAF3IP3. Interacts with TOMM70; the interaction is enhanced by Sendai virus infection. Interacts with ZNFX1. Interacts with N4BP3; this interaction promotes the polyubiquitination of MAVS. Interacts with TAX1BP1; this interaction induces MAVS polyubiquitination. Interacts with NLRP3; promoting NLRP3 recruitment to mitochondria and activation of the NLRP3 inflammasome. Interacts with ECSIT; this interaction bridges RIGI to the MAVS complex at the mitochondrion. Interacts with UBL7; this interaction promotes MAVS 'Lys-27'-linked ubiquitination leading to type I interferon production. Interacts (via transmembrane domain) with SMIM30/MAVI1 (via transmembrane domain); the interaction disrupts MAVS interaction with RIGI and inhibits MAVS aggregation, resulting in the repression of type I interferon signaling and innate immune responses. In terms of assembly, (Microbial infection) Interacts with hepatitis C virus (HCV) NS3/4A protease; this interaction leads to MAVS cleavage, thereby preventing the establishment of an antiviral state. (Microbial infection) Interacts with hepatitis GB virus B NS3/4A protease; this interaction leads to MAVS cleavage. As to quaternary structure, (Microbial infection) Interacts with human respiratory syncytial virus/HRSV protein NS1; this interaction disrupts MAVS binding to RIGI. In terms of assembly, (Microbial infection) Interacts with Andes virus Nnon-structural protein NS-S; this interaction may reduce MAVS ubiquitination and leads to inhibition of MAVS-induced type-I IFN signaling pathway. (Microbial infection) Interacts with Seneca Valley virus protease 3C; this interaction allows the cleavage of MAVS and subsequent suppression of host innate immunity. As to quaternary structure, (Microbial infection) Interacts with SARS-CoV virus protein ORF9b; this interaction mediates MAVS proteasomal degradation. In terms of assembly, (Microbial infection) Interacts with SARS-CoV-2 virus protein M; this interaction impairs MAVS self-association and its recruitment of downstream components. (Microbial infection) Interacts with foot-and-mouth disease virus protein VP1; this interaction competes with TRAF3 interaction to MAVS leading to suppression of host innate immunity. As to quaternary structure, (Microbial infection) Interacts with Epstein-Barr virus protein BILF1; this interaction mediates MAVS routing from mitochondria to lysosomes. Post-translationally, following activation, phosphorylated by TBK1 at Ser-442 in the pLxIS motif. The phosphorylated pLxIS motif constitutes an IRF3-binding motif, leading to recruitment of the transcription factor IRF3 to induce type-I interferons and other cytokines. In terms of processing, ubiquitinated. Undergoes 'Lys-48'-linked polyubiquitination catalyzed by ITCH; ITCH-dependent polyubiquitination is mediated by the interaction with PCBP2 and leads to MAVS/IPS1 proteasomal degradation. Ubiquitinated by RNF125, leading to its degradation by the proteasome. Undergoes 'Lys-48'-linked ubiquitination catalyzed by SMURF1. Undergoes 'Lys-48'-linked ubiquitination catalyzed by MARCHF5 at Lys-7 and Lys-500, leading to proteasomal degradation. Ubiquitinated via 'Lys-63'-linked ubiquitination at Lys-10, Lys-311 and Lys-461 by UBE2N and TRIM31, promoting MAVS polymerization and formation of three-stranded helical filaments on mitochondria. Undergoes 'Lys-63'-linked ubiquitination leading to enhanced interaction between MAVS and TRAF2. Undergoes 'Lys-27'-linked ubiquitination by TRIM21 leading to enhanced interaction between MAVS and TBK1. Deubiquitinated by USP10 leading to attenuation of RIGI-mediated MAVS aggregation and production of type I interferon. Undergoes 'Lys-48'-linked polyubiquitination catalyzed by RNF115 leading to its degradation. Palmitoylated by ZHDDC4. Palmitoylation promotes MAVS stabilization and activation by inhibiting 'Lys-48'- but facilitating 'Lys-63'-linked ubiquitination. Post-translationally, proteolytically cleaved by apoptotic caspases during apoptosis, leading to its inactivation. Cleavage by CASP3 during virus-induced apoptosis inactivates it, preventing cytokine overproduction. In terms of processing, (Microbial infection) Cleaved and degraded by hepatitis A virus (HAV) protein 3ABC allowing the virus to disrupt the activation of host IRF3 through the MDA5 pathway. (Microbial infection) Cleaved by the protease 2A of coxsackievirus B3, poliovirus and enterovirus 71 allowing the virus to disrupt the host type I interferon production. Post-translationally, (Microbial infection) Cleaved by Seneca Valley virus protease 3C allowing the virus to suppress interferon type-I production. In terms of processing, (Microbial infection) Cleaved by HCV protease NS3/4A, thereby preventing the establishment of an antiviral state. (Microbial infection) UFMylated by ULF1 in association with Epstein-Barr virus BILF1; leading to MAVS routing to the lysosome. Present in T-cells, monocytes, epithelial cells and hepatocytes (at protein level). Ubiquitously expressed, with highest levels in heart, skeletal muscle, liver, placenta and peripheral blood leukocytes.

Its subcellular location is the mitochondrion outer membrane. It localises to the mitochondrion. The protein localises to the peroxisome. Its function is as follows. Adapter required for innate immune defense against viruses. Acts downstream of DHX33, RIGI and IFIH1/MDA5, which detect intracellular dsRNA produced during viral replication, to coordinate pathways leading to the activation of NF-kappa-B, IRF3 and IRF7, and to the subsequent induction of antiviral cytokines such as IFNB and RANTES (CCL5). Peroxisomal and mitochondrial MAVS act sequentially to create an antiviral cellular state. Upon viral infection, peroxisomal MAVS induces the rapid interferon-independent expression of defense factors that provide short-term protection, whereas mitochondrial MAVS activates an interferon-dependent signaling pathway with delayed kinetics, which amplifies and stabilizes the antiviral response. May activate the same pathways following detection of extracellular dsRNA by TLR3. May protect cells from apoptosis. Involved in NLRP3 inflammasome activation by mediating NLRP3 recruitment to mitochondria. In Homo sapiens (Human), this protein is Mitochondrial antiviral-signaling protein.